The sequence spans 209 residues: MSISKAIAADLLEIKAVSLSPSQPFTWASGIKSPIYTDNRVTLAYPEVRSQIEGAFAELIKTEFPEVEVIAGTATAGIPHGAIIADYLKLPFAYIRSKPKDHGAGNQVEGRVAKGQKMVVVEDLISTGGSVLEAVAAAEREGADVLGVVAIFTYELEKANSKFADADVKLATLTNYSELIEIAKETGYVTKEELELLKKFKENQETWQA.

5-phospho-alpha-D-ribose 1-diphosphate-binding positions include R96, K100, H102, and 122 to 130; that span reads EDLISTGGS. Orotate is bound at residue S126.

This sequence belongs to the purine/pyrimidine phosphoribosyltransferase family. PyrE subfamily. Homodimer. The cofactor is Mg(2+).

It carries out the reaction orotidine 5'-phosphate + diphosphate = orotate + 5-phospho-alpha-D-ribose 1-diphosphate. It functions in the pathway pyrimidine metabolism; UMP biosynthesis via de novo pathway; UMP from orotate: step 1/2. In terms of biological role, catalyzes the transfer of a ribosyl phosphate group from 5-phosphoribose 1-diphosphate to orotate, leading to the formation of orotidine monophosphate (OMP). In Lactococcus lactis subsp. cremoris (strain MG1363), this protein is Orotate phosphoribosyltransferase.